A 71-amino-acid chain; its full sequence is uncharacterized protein (71 aa).

The helical transmembrane segment at 12–32 (FLVSIAFFGLAPTIPLLAIAL) threads the bilayer.

It is found in the membrane. This is an uncharacterized protein from Sinorhizobium fredii (strain NBRC 101917 / NGR234).